A 122-amino-acid polypeptide reads, in one-letter code: Large ribosomal subunit protein bL12 (122 aa).

This sequence belongs to the bacterial ribosomal protein bL12 family. As to quaternary structure, homodimer. Part of the ribosomal stalk of the 50S ribosomal subunit. Forms a multimeric L10(L12)X complex, where L10 forms an elongated spine to which 2 to 4 L12 dimers bind in a sequential fashion. Binds GTP-bound translation factors.

Its function is as follows. Forms part of the ribosomal stalk which helps the ribosome interact with GTP-bound translation factors. Is thus essential for accurate translation. This chain is Large ribosomal subunit protein bL12, found in Azotobacter vinelandii (strain DJ / ATCC BAA-1303).